A 131-amino-acid chain; its full sequence is MRHYEIVFMVHPDQSEQVPGMIERYTGVITEANGKIHRLEDWGRRQLAYPIQDLHKAHYVLMNVEAPAETIEELETAFRFNDAVLRNMVMRTKVAVTEASPMAKAKDERDSRRGPAGDRSYDEANAEEIAE.

The segment at 96 to 131 (VTEASPMAKAKDERDSRRGPAGDRSYDEANAEEIAE) is disordered. Residues 104-122 (KAKDERDSRRGPAGDRSYD) show a composition bias toward basic and acidic residues.

This sequence belongs to the bacterial ribosomal protein bS6 family.

Functionally, binds together with bS18 to 16S ribosomal RNA. This Shewanella sp. (strain MR-4) protein is Small ribosomal subunit protein bS6.